The primary structure comprises 68 residues: uncharacterized protein (68 aa).

This is an uncharacterized protein from Dryophytes versicolor (chameleon treefrog).